A 263-amino-acid polypeptide reads, in one-letter code: Small ribosomal subunit protein uS2 (263 aa).

Residues 228-263 (QLEEPEADLADEDDNGMTTSDDGDAEALDIPDDSDA) are disordered. Residues 230–263 (EEPEADLADEDDNGMTTSDDGDAEALDIPDDSDA) show a composition bias toward acidic residues.

This sequence belongs to the universal ribosomal protein uS2 family.

This Thermosynechococcus vestitus (strain NIES-2133 / IAM M-273 / BP-1) protein is Small ribosomal subunit protein uS2.